The sequence spans 201 residues: L(+)-tartrate dehydratase subunit beta (201 aa).

Residue His-37 is part of the active site.

It belongs to the class-I fumarase family. As to quaternary structure, heterotetramer of two alpha and two beta subunits.

It carries out the reaction (2R,3R)-tartrate = oxaloacetate + H2O. The protein is L(+)-tartrate dehydratase subunit beta (ttdB) of Shigella sonnei (strain Ss046).